Reading from the N-terminus, the 182-residue chain is Lipid A acyltransferase PagP (182 aa).

The N-terminal stretch at 1-21 (MTQYFRSLAFFLLPVPATAMA) is a signal peptide. The N-palmitoyl cysteine moiety is linked to residue Cys22. Cys22 carries S-diacylglycerol cysteine lipidation. Catalysis depends on residues His55, Asp98, and Ser99.

Belongs to the lipid A palmitoyltransferase family. Homodimer.

Its subcellular location is the cell outer membrane. The enzyme catalyses a lipid A + a 1,2-diacyl-sn-glycero-3-phosphocholine = a hepta-acyl lipid A + a 2-acyl-sn-glycero-3-phosphocholine. It catalyses the reaction a lipid IVA + a 1,2-diacyl-sn-glycero-3-phosphocholine = a lipid IVB + a 2-acyl-sn-glycero-3-phosphocholine. It carries out the reaction a lipid IIA + a 1,2-diacyl-sn-glycero-3-phosphocholine = a lipid IIB + a 2-acyl-sn-glycero-3-phosphocholine. Functionally, transfers a fatty acid residue from the sn-1 position of a phospholipid to the N-linked hydroxyfatty acid chain on the proximal unit of lipid A or its precursors. The sequence is that of Lipid A acyltransferase PagP from Bordetella pertussis (strain CS).